Reading from the N-terminus, the 229-residue chain is Large ribosomal subunit protein uL1 (229 aa).

Belongs to the universal ribosomal protein uL1 family. As to quaternary structure, part of the 50S ribosomal subunit.

Functionally, binds directly to 23S rRNA. The L1 stalk is quite mobile in the ribosome, and is involved in E site tRNA release. Protein L1 is also a translational repressor protein, it controls the translation of the L11 operon by binding to its mRNA. The polypeptide is Large ribosomal subunit protein uL1 (Streptococcus agalactiae serotype Ia (strain ATCC 27591 / A909 / CDC SS700)).